The chain runs to 808 residues: Probable inorganic carbon transporter subunit DabA (808 aa).

Positions 334, 336, 494, and 509 each coordinate Zn(2+).

The protein belongs to the inorganic carbon transporter (TC 9.A.2) DabA family. As to quaternary structure, forms a complex with DabB. Zn(2+) serves as cofactor.

The protein localises to the cell inner membrane. Functionally, part of an energy-coupled inorganic carbon pump. This Rhodopseudomonas palustris (strain BisB5) protein is Probable inorganic carbon transporter subunit DabA.